Here is a 190-residue protein sequence, read N- to C-terminus: Probable thymidylate kinase (190 aa).

9-16 (GIDGAGKT) is a binding site for ATP.

Belongs to the thymidylate kinase family.

It catalyses the reaction dTMP + ATP = dTDP + ADP. The protein is Probable thymidylate kinase (tmk1) of Sulfurisphaera tokodaii (strain DSM 16993 / JCM 10545 / NBRC 100140 / 7) (Sulfolobus tokodaii).